The sequence spans 267 residues: Glutamate 5-kinase (267 aa).

An ATP-binding site is contributed by Lys-18. Residues Ser-58, Asp-145, and Asn-157 each coordinate substrate. ATP contacts are provided by residues 177–178 (SD) and 219–225 (TGGMATK).

This sequence belongs to the glutamate 5-kinase family.

The protein localises to the cytoplasm. The enzyme catalyses L-glutamate + ATP = L-glutamyl 5-phosphate + ADP. It functions in the pathway amino-acid biosynthesis; L-proline biosynthesis; L-glutamate 5-semialdehyde from L-glutamate: step 1/2. Functionally, catalyzes the transfer of a phosphate group to glutamate to form L-glutamate 5-phosphate. The polypeptide is Glutamate 5-kinase (Clostridium tetani (strain Massachusetts / E88)).